The chain runs to 100 residues: Replication restart protein PriB (100 aa).

Positions methionine 1–lysine 99 constitute an SSB domain.

The protein belongs to the PriB family. As to quaternary structure, homodimer. Interacts with PriA and DnaT. Component of the replication restart primosome. Primosome assembly occurs via a 'hand-off' mechanism. PriA binds to replication forks, subsequently PriB then DnaT bind; DnaT then displaces ssDNA to generate the helicase loading substrate.

Involved in the restart of stalled replication forks, which reloads the replicative helicase on sites other than the origin of replication; the PriA-PriB pathway is the major replication restart pathway. During primosome assembly it facilitates complex formation between PriA and DnaT on DNA; stabilizes PriA on DNA. Stimulates the DNA unwinding activity of PriA helicase. In Neisseria meningitidis serogroup A / serotype 4A (strain DSM 15465 / Z2491), this protein is Replication restart protein PriB.